The sequence spans 274 residues: Bis(5'-nucleosyl)-tetraphosphatase, symmetrical (274 aa).

It belongs to the Ap4A hydrolase family.

It catalyses the reaction P(1),P(4)-bis(5'-adenosyl) tetraphosphate + H2O = 2 ADP + 2 H(+). Hydrolyzes diadenosine 5',5'''-P1,P4-tetraphosphate to yield ADP. This chain is Bis(5'-nucleosyl)-tetraphosphatase, symmetrical, found in Shewanella oneidensis (strain ATCC 700550 / JCM 31522 / CIP 106686 / LMG 19005 / NCIMB 14063 / MR-1).